The sequence spans 339 residues: Lipopolysaccharide glucosyltransferase WaaO (339 aa).

UDP is bound by residues 34 to 39 (GTDKNF) and 131 to 132 (DA). The Mg(2+) site is built by Asp131 and Asp133. 2 consecutive short sequence motifs (DXD) follow at residues 131–133 (DAD) and 220–222 (DQD). His265 contacts Mg(2+). A UDP-binding site is contributed by 265 to 271 (HYIGPTK).

The protein belongs to the glycosyltransferase 8 family. Requires Mg(2+) as cofactor.

It carries out the reaction UDP-glucose + lipopolysaccharide = UDP + alpha-D-glucosyl-lipopolysaccharide.. It catalyses the reaction alpha-D-Gal-(1-&gt;6)-alpha-D-Glc-(1-&gt;3)-[L-alpha-D-Hep-(1-&gt;7)]-4-O-PO3(2-)-L-alpha-D-Hep-(1-&gt;3)-4-O-PO3(2-)-L-alpha-D-Hep-(1-&gt;5)-[alpha-Kdo-(2-&gt;4)]-alpha-Kdo-(2-&gt;6)-lipid A + UDP-alpha-D-glucose = alpha-D-Glc-(1-&gt;3)-[alpha-D-Gal-(1-&gt;6)]-alpha-D-Glc-(1-&gt;3)-[L-alpha-D-Hep-(1-&gt;7)]-4-O-PO3(2-)-L-alpha-D-Hep-(1-&gt;3)-4-O-PO3(2-)-L-alpha-D-Hep-(1-&gt;5)-[alpha-Kdo-(2-&gt;4)]-alpha-Kdo-(2-&gt;6)-lipid A + UDP + H(+). It participates in bacterial outer membrane biogenesis; LPS core biosynthesis. Glucosyltransferase involved in the biosynthesis of the core oligosaccharide region of lipopolysaccharide (LPS). Catalyzes the addition of a second glucose (glucose II) to the first outer-core glucose (glucose I). In vitro, can add multiple glucose residues to its lipid acceptor. Activity does not require the branched galactose added by WaaB, but it is higher in the presence of this branched galactose. In the absence of a lipid acceptor, can hydrolyze UDP-glucose, but not UDP-galactose. The protein is Lipopolysaccharide glucosyltransferase WaaO of Escherichia coli (strain K12).